The chain runs to 288 residues: Shikimate dehydrogenase (NADP(+)) (288 aa).

Shikimate-binding positions include 15–17 (SKS) and threonine 64. Residue lysine 68 is the Proton acceptor of the active site. Glutamate 83 provides a ligand contact to NADP(+). Asparagine 92 and aspartate 117 together coordinate shikimate. Residues 141-145 (GAGGA), 165-170 (NRTVSK), and methionine 232 contribute to the NADP(+) site. Tyrosine 234 serves as a coordination point for shikimate. Residue glycine 254 coordinates NADP(+).

Belongs to the shikimate dehydrogenase family. In terms of assembly, homodimer.

The catalysed reaction is shikimate + NADP(+) = 3-dehydroshikimate + NADPH + H(+). The protein operates within metabolic intermediate biosynthesis; chorismate biosynthesis; chorismate from D-erythrose 4-phosphate and phosphoenolpyruvate: step 4/7. Involved in the biosynthesis of the chorismate, which leads to the biosynthesis of aromatic amino acids. Catalyzes the reversible NADPH linked reduction of 3-dehydroshikimate (DHSA) to yield shikimate (SA). The chain is Shikimate dehydrogenase (NADP(+)) from Psychrobacter cryohalolentis (strain ATCC BAA-1226 / DSM 17306 / VKM B-2378 / K5).